Here is a 264-residue protein sequence, read N- to C-terminus: Indolethylamine N-methyltransferase (264 aa).

At K14 the chain carries N6-succinyllysine. S-adenosyl-L-methionine-binding positions include Y21, Y26, 64-65 (GS), Y70, D86, and N91. The residue at position 97 (K97) is an N6-succinyllysine. Residues 143 to 144 (DV) and F164 each bind S-adenosyl-L-methionine.

Belongs to the class I-like SAM-binding methyltransferase superfamily. NNMT/PNMT/TEMT family. Monomer. As to expression, detected in lung and liver (at protein level).

The protein resides in the cytoplasm. The catalysed reaction is a tertiary amine + S-adenosyl-L-methionine = a methylated tertiary amine + S-adenosyl-L-homocysteine + H(+). It catalyses the reaction a secondary amine + S-adenosyl-L-methionine = a methylated secondary amine + S-adenosyl-L-homocysteine + H(+). The enzyme catalyses a primary amine + S-adenosyl-L-methionine = a methylated primary amine + S-adenosyl-L-homocysteine + H(+). It carries out the reaction dimethyl sulfide + S-adenosyl-L-methionine = trimethylsulfonium + S-adenosyl-L-homocysteine. With respect to regulation, inhibited by the S-adenosyl-L-methionine analog sinefungin and by the product S-adenosyl-L-homocysteine. In terms of biological role, catalyzes the N-methylation of tryptamine and structurally related compounds. Functions as a thioether S-methyltransferase and is active with a variety of thioethers and the corresponding selenium and tellurium compounds, including 3-methylthiopropionaldehyde, dimethyl selenide, dimethyl telluride, 2-methylthioethylamine, 2-methylthioethanol, methyl-n-propyl sulfide and diethyl sulfide. Plays an important role in the detoxification of selenium compounds. The sequence is that of Indolethylamine N-methyltransferase (Inmt) from Mus musculus (Mouse).